The following is a 492-amino-acid chain: Malonyl-CoA decarboxylase, mitochondrial (492 aa).

Residues 1–28 form a disordered region; the sequence is MRGLGPGLRARRLLPLRSPPRPPGPRGR. A mitochondrion-targeting transit peptide spans 1–38; the sequence is MRGLGPGLRARRLLPLRSPPRPPGPRGRRLCGGLAASA. Residues 39–189 form an alpha-helical domain region; it reads MDELLRRAVP…VLKSMLSEWF (151 aa). Lys58 is subject to N6-acetyllysine. At Lys167 the chain carries N6-acetyllysine; alternate. Lys167 is modified (N6-succinyllysine; alternate). Residues 190–492 are catalytic domain; that stretch reads SSGFLNLERV…VAQFQNNSKL (303 aa). Lys210 carries the N6-acetyllysine modification. An N6-succinyllysine modification is found at Lys221. 298-304 provides a ligand contact to malonyl-CoA; it reads QGVELGT. Lys316 carries the post-translational modification N6-acetyllysine. Residue Ser328 coordinates malonyl-CoA. Ser328 acts as the Proton acceptor in catalysis. Residue Lys385 is modified to N6-acetyllysine; alternate. Lys385 carries the N6-succinyllysine; alternate modification. Lys388 carries the post-translational modification N6-acetyllysine. Residue His422 coordinates malonyl-CoA. His422 acts as the Proton donor in catalysis. N6-acetyllysine occurs at positions 441 and 471. The Microbody targeting signal signature appears at 490–492; the sequence is SKL.

As to quaternary structure, homotetramer. Dimer of dimers. The two subunits within a dimer display conformational differences suggesting that at any given moment, only one of the two subunits is competent for malonyl-CoA binding and catalytic activity. Under oxidizing conditions, can form disulfide-linked homotetramers (in vitro). Associates with the peroxisomal targeting signal receptor PEX5. Post-translationally, interchain disulfide bonds may form in peroxisomes (Potential). Interchain disulfide bonds are not expected to form in the reducing environment of the cytoplasm and mitochondria. In terms of processing, acetylation at Lys-471 activates malonyl-CoA decarboxylase activity. Deacetylation at Lys-471 by SIRT4 represses activity, leading to promote lipogenesis.

Its subcellular location is the cytoplasm. It localises to the mitochondrion matrix. The protein resides in the peroxisome. It is found in the peroxisome matrix. The enzyme catalyses malonyl-CoA + H(+) = acetyl-CoA + CO2. The protein operates within metabolic intermediate biosynthesis; acetyl-CoA biosynthesis; acetyl-CoA from malonyl-CoA: step 1/1. With respect to regulation, malonyl-CoA decarboxylase activity does not require any cofactors or divalent metal ions. Its function is as follows. Catalyzes the conversion of malonyl-CoA to acetyl-CoA. In the fatty acid biosynthesis MCD selectively removes malonyl-CoA and thus assures that methyl-malonyl-CoA is the only chain elongating substrate for fatty acid synthase and that fatty acids with multiple methyl side chains are produced. In peroxisomes it may be involved in degrading intraperoxisomal malonyl-CoA, which is generated by the peroxisomal beta-oxidation of odd chain-length dicarboxylic fatty acids. Plays a role in the metabolic balance between glucose and lipid oxidation in muscle independent of alterations in insulin signaling. Plays a role in controlling the extent of ischemic injury by promoting glucose oxidation. The protein is Malonyl-CoA decarboxylase, mitochondrial of Mus musculus (Mouse).